The sequence spans 234 residues: UPF0173 metal-dependent hydrolase Rleg2_1519 (234 aa).

It belongs to the UPF0173 family.

The protein is UPF0173 metal-dependent hydrolase Rleg2_1519 of Rhizobium leguminosarum bv. trifolii (strain WSM2304).